The primary structure comprises 2663 residues: Ankyrin repeat domain-containing protein 11 (2663 aa).

Disordered stretches follow at residues 1 to 90 and 128 to 169; these read MPKG…KEPV and SANS…ERGE. 2 stretches are compositionally biased toward basic and acidic residues: residues 21–54 and 69–90; these read MVEK…VRER and EQKD…KEPV. Over residues 128-155 the composition is skewed to polar residues; that stretch reads SANSPVDTTPKHPSQSTVCQKGTPNSAS. A compositionally biased stretch (basic and acidic residues) spans 156–169; the sequence is KTKDKVNKRNERGE. ANK repeat units lie at residues 167–196, 200–229, 233–262, and 266–292; these read RGET…DVNV, AGWT…EVNT, DDDT…NPQQ, and KGET…YTSS. S276 carries the phosphoserine modification. Disordered regions lie at residues 289–380, 398–647, and 723–783; these read YTSS…SNSF, APKK…GQCS, and DTNK…NDLK. Residues 295-305 show a composition bias toward acidic residues; sequence SSTESSEEEDA. Positions 309-320 are enriched in polar residues; it reads APSSSVDGNNTD. Over residues 356-376 the composition is skewed to basic and acidic residues; that stretch reads DRVPPVDDKHLLKKDYRKETK. S408 carries the phosphoserine modification. Position 410 is a phosphothreonine (T410). S411 bears the Phosphoserine mark. Over residues 438-451 the composition is skewed to basic and acidic residues; that stretch reads KTREPSNAKQQKEK. Over residues 452 to 462 the composition is skewed to basic residues; it reads NKVKKKRKKET. Basic and acidic residues predominate over residues 463-477; the sequence is KGREVRFGKRSDKFC. Residues 481–493 show a composition bias toward acidic residues; the sequence is SESESSESGEDDR. The span at 513 to 531 shows a compositional bias: low complexity; that stretch reads SLFSSLSASSTSSHGSSAA. Over residues 539 to 550 the composition is skewed to basic and acidic residues; sequence TDQHTKHWRTDN. Over residues 551 to 562 the composition is skewed to polar residues; sequence WKTISSPAWSEV. A compositionally biased stretch (low complexity) spans 576-588; sequence ESDYSSEGSSVES. Basic residues-rich tracts occupy residues 591–602 and 629–641; these read PVRKRQEHRKRA and VKKH…HKNK. Residue S834 is modified to Phosphoserine. Composition is skewed to basic and acidic residues over residues 881-928, 935-1043, 1059-1090, and 1099-1112; these read VKED…EKHK, SEKD…KSIL, KKDT…KEKA, and FSEK…KEKS. Disordered stretches follow at residues 881–1043 and 1059–1393; these read VKED…KSIL and KKDT…GQYE. S1079 is subject to Phosphoserine. Residue T1120 is modified to Phosphothreonine. A Phosphoserine modification is found at S1123. Composition is skewed to basic and acidic residues over residues 1142 to 1301, 1330 to 1347, and 1359 to 1393; these read DLPR…DKIS, GDDK…LKEK, and KSHD…GQYE. At T1419 the chain carries Phosphothreonine. Basic and acidic residues-rich tracts occupy residues 1424 to 1446, 1466 to 1545, 1556 to 1574, 1587 to 1597, and 1605 to 1639; these read STEK…KELK, REKW…KGDP, APSK…KLLG, LSQKDLEIEER, and MKQM…DIPA. Residues 1424-1710 are disordered; the sequence is STEKKDKNDS…TGVPTPTSVL (287 aa). The residue at position 1509 (S1509) is a Phosphoserine. S1692 bears the Phosphoserine mark. The span at 1698 to 1710 shows a compositional bias: polar residues; the sequence is SRPTGVPTPTSVL. S1792 is subject to Phosphoserine. Residues 1814–1836 form a disordered region; that stretch reads SVPAASSYDSPMPPSMEDRAPLP. Position 1847 is a phosphoserine (S1847). Y1850 and Y1851 each carry phosphotyrosine. A phosphoserine mark is found at S1852, S1859, and S1990. 2 disordered regions span residues 1988–2019 and 2131–2406; these read PESP…PAPP and LDLG…STQQ. 2 stretches are compositionally biased toward low complexity: residues 2310–2324 and 2391–2406; these read IQPE…AEAP and RSTQ…STQQ. The tract at residues 2369–2663 is important for protein degradation; sequence AKARGSEDDD…VNDDFVLLPA (295 aa).

In terms of assembly, interacts with the PAS region of the p160 coactivators. Post-translationally, subject to proteasomal degradation which is probably essential to regulate its activity.

Its subcellular location is the nucleus. In terms of biological role, chromatin regulator which modulates histone acetylation and gene expression in neural precursor cells. May recruit histone deacetylases (HDACs) to the p160 coactivators/nuclear receptor complex to inhibit ligand-dependent transactivation. Has a role in proliferation and development of cortical neural precursors. May also regulate bone homeostasis. In Homo sapiens (Human), this protein is Ankyrin repeat domain-containing protein 11 (ANKRD11).